Consider the following 963-residue polypeptide: MVELPDLLTDLFRRHRGRTALRTAGRTWTYEELDRVTSALARRIDAECPAGRRVLVAGEHTAEAVVWALAAMRSHAVHTPMNPGLPADRFEEFARVADAALLVCFEREALVRGEKAGLRALYAGDVGWPTDPAPAPADGTADEPARSRVAYSIFTSGSTGDPKLVDVGHGGLLNLCRSLRRLLDITPDDQVLHFASLSFDASVSEILGTLYAGATLVVPVRDQASWLGSVSRHLAAHGCDLAMLSPSVYARLDEAARSRIRKVEFCGEALGEGEYDKAARYSRVFNAYGPTEATVCFSLAELTSYTPSIGTPVDGFRAYVRDPDSGDHATAGTGELVIVGDGVALGYAGGSPAENEVFGTVDGSPAYATGDVVSLSDDGELTYLGRIDEQIKRLGHRVNLAHVGSTLSRHLGREVALVRQDATILLVTAADGEATEESLMARIRDLVPVWEAPDRLVLVDALPLTSGGKVDRSALRELLASPAGAPHGGTDGEDAAELRRVLDVVTAVLGQEIGPETSIFDAGGSSLAMIQIQVKLSDAYGEEAVEAAFAAMDYDFAPAAFLRHLRGEAVAPAESAVDTLLRRVETERDALRAELPLLRRDTRHEPVPGAADGDREVLLTGASGFIGGHVLDRLLAAGRPVLVVSTGDPDGVLTGHATRFGRQAADYARVRAISYAELERWVDRRRGPVVDAVVHCGYQVNHLLPLDSHLSGSVRNTALVVRAAAALGARSFAFLSAASAGADFLPLSAATLTAVGDPYSRSKLISEEYVNTLAVLGCAVSHYRPGLVYGHRPEDRHHLKDDWFTALLETARRVGAMPRLSGHVPVCDVGTLADTLLGRPDANPGTADGASRTPDSRSAVVVHRTYALDELLRHTGLTEADVLAPAAWFERVRDGGEVPAPLLAAMQAALSGPGWPSAHREVDHDILGRLLGTPPDTPAGDRPERTGTTAEAQNGAAHAPTPR.

Residues 492–568 (GEDAAELRRV…AAFLRHLRGE (77 aa)) form the Carrier domain. Ser526 is modified (O-(pantetheine 4'-phosphoryl)serine). A disordered region spans residues 928 to 963 (GRLLGTPPDTPAGDRPERTGTTAEAQNGAAHAPTPR).

The protein belongs to the ATP-dependent AMP-binding enzyme family. Pantetheine 4'-phosphate serves as cofactor.

It catalyses the reaction 4-amino-L-phenylalanine + holo-[peptidyl-carrier protein] + ATP = 4-amino-L-phenylalanyl-[peptidyl-carrier protein] + AMP + diphosphate. It participates in antibiotic biosynthesis. Functionally, involved in chloramphenicol biosynthesis. Activates 4-amino-L-phenylalanine by adenylation and loads it onto its peptidyl carrier domain, via a thioester linkage to the phosphopanthetheine moiety. Can also adenylate tyrosine and phenylalanine at low rates, but not L-p-nitrophenylalanine or threo-phenylserine. The sequence is that of Non-ribosomal peptide synthetase CmlP from Streptomyces venezuelae (strain ATCC 10712 / CBS 650.69 / DSM 40230 / JCM 4526 / NBRC 13096 / PD 04745).